The sequence spans 438 residues: MAALVVSGAAEQGGRDGPGRGRAPRGRVANQIPPEILKNPQLQAAIRVLPSNYNFEIPKTIWRIQQAQAKKVALQMPEGLLLFACTIVDILERFTEAEVMVMGDVTYGACCVDDFTARALGADFLVHYGHSCLIPMDTSAQDFRVLYVFVDIRIDTTHLLDSLRLTFPPATALALVSTIQFVSTLQAAAQELKAEYRVSVPQCKPLSPGEILGCTSPRLSKEVEAVVYLGDGRFHLESVMIANPNVPAYRYDPYSKVLSREHYDHQRMQAARQEAIATARSAKSWGLILGTLGRQGSPKILEHLESRLRALGLSFVRLLLSEIFPSKLSLLPEVDVWVQVACPRLSIDWGTAFPKPLLTPYEAAVALRDISWQQPYPMDFYAGSSLGPWTVNHGQDRRPHAPGRPARGKVQEGSARPPSAVACEDCSCRDEKVAPLAP.

The disordered stretch occupies residues 7–29 (SGAAEQGGRDGPGRGRAPRGRVA). [4Fe-4S] cluster is bound by residues Cys-110, Cys-214, and Cys-342. Residues 391-421 (VNHGQDRRPHAPGRPARGKVQEGSARPPSAV) form a disordered region.

The protein belongs to the DPH1/DPH2 family. DPH1 subfamily. Component of the 2-(3-amino-3-carboxypropyl)histidine synthase complex composed of DPH1, DPH2, DPH3 and a NADH-dependent reductase. Interacts with DPH2. Interacts with RBM8A. The cofactor is [4Fe-4S] cluster. Expressed in heart, brain, placenta, lung, liver, skeletal muscle, kidney, pancreas, spleen, thymus, mammary gland, colon, small intestine, testis and ovary. Reduced expression in primary breast and ovarian tumors.

It is found in the nucleus. It localises to the cytoplasm. It carries out the reaction L-histidyl-[translation elongation factor 2] + S-adenosyl-L-methionine = 2-[(3S)-amino-3-carboxypropyl]-L-histidyl-[translation elongation factor 2] + S-methyl-5'-thioadenosine + H(+). Its pathway is protein modification; peptidyl-diphthamide biosynthesis. In terms of biological role, catalyzes the first step of diphthamide biosynthesis, a post-translational modification of histidine which occurs in elongation factor 2. DPH1 and DPH2 transfer a 3-amino-3-carboxypropyl (ACP) group from S-adenosyl-L-methionine (SAM) to a histidine residue, the reaction is assisted by a reduction system comprising DPH3 and a NADH-dependent reductase. Acts as a tumor suppressor. The protein is 2-(3-amino-3-carboxypropyl)histidine synthase subunit 1 of Homo sapiens (Human).